The sequence spans 97 residues: Transcription and mRNA export factor SUS1 (97 aa).

The protein belongs to the ENY2 family. Component of the nuclear pore complex (NPC)-associated TREX-2 complex (transcription and export complex 2), composed of at least SUS1, SAC3, THP1, SEM1, and CDC31. TREX-2 contains 2 SUS1 chains. The TREX-2 complex interacts with the nucleoporin NUP1. Component of the 1.8 MDa SAGA transcription coactivator-HAT complex. SAGA is built of 5 distinct domains with specialized functions. Within the SAGA complex, SUS1, SGF11, SGF73 and UBP8 form an additional subcomplex of SAGA called the DUB module (deubiquitination module). Interacts directly with THP1, SAC3, SGF11, and with the RNA polymerase II.

It is found in the nucleus. It localises to the nucleoplasm. The protein resides in the cytoplasm. The protein localises to the P-body. In terms of biological role, involved in mRNA export coupled transcription activation by association with both the TREX-2 and the SAGA complexes. At the promoters, SAGA is required for recruitment of the basal transcription machinery. It influences RNA polymerase II transcriptional activity through different activities such as TBP interaction and promoter selectivity, interaction with transcription activators, and chromatin modification through histone acetylation and deubiquitination. Within the SAGA complex, participates in a subcomplex required for deubiquitination of H2B and for the maintenance of steady-state H3 methylation levels. The TREX-2 complex functions in docking export-competent ribonucleoprotein particles (mRNPs) to the nuclear entrance of the nuclear pore complex (nuclear basket). TREX-2 participates in mRNA export and accurate chromatin positioning in the nucleus by tethering genes to the nuclear periphery. May also be involved in cytoplasmic mRNA decay by interaction with components of P-bodies. This is Transcription and mRNA export factor SUS1 from Meyerozyma guilliermondii (strain ATCC 6260 / CBS 566 / DSM 6381 / JCM 1539 / NBRC 10279 / NRRL Y-324) (Yeast).